Here is a 317-residue protein sequence, read N- to C-terminus: Annexin A13 (317 aa).

The N-myristoyl glycine moiety is linked to residue G2. Annexin repeat units follow at residues 15 to 86 (FDAD…ALLD), 87 to 158 (RPNE…SLLQ), 170 to 242 (ELAG…TIVR), and 246 to 317 (DLEG…ALLH).

It belongs to the annexin family. Monomer and homodimer. Detected on the tips of microvilli in small intestine (at protein level).

Its subcellular location is the apical cell membrane. The protein localises to the cell membrane. The protein resides in the cytoplasmic vesicle. Binds to membranes enriched in phosphatidylserine or phosphatidylglycerol in a calcium-dependent manner. Half-maximal membrane binding requires about 60 uM calcium. Does not bind to membranes that lack phospholipids with an acidic headgroup. The protein is Annexin A13 (Anxa13) of Mus musculus (Mouse).